Here is a 502-residue protein sequence, read N- to C-terminus: Maturase K (502 aa).

Belongs to the intron maturase 2 family. MatK subfamily.

It localises to the plastid. The protein localises to the chloroplast. In terms of biological role, usually encoded in the trnK tRNA gene intron. Probably assists in splicing its own and other chloroplast group II introns. Binds its homologous trnK precursor transcript. This is Maturase K from Sinapis alba (White mustard).